We begin with the raw amino-acid sequence, 155 residues long: FAD synthase (155 aa).

Residues threonine 9–phenylalanine 10, histidine 14–histidine 17, and aspartate 92 each bind ATP.

This sequence belongs to the archaeal FAD synthase family. Homodimer. Requires a divalent metal cation as cofactor.

It catalyses the reaction FMN + ATP + H(+) = FAD + diphosphate. Its pathway is cofactor biosynthesis; FAD biosynthesis; FAD from FMN: step 1/1. Its function is as follows. Catalyzes the transfer of the AMP portion of ATP to flavin mononucleotide (FMN) to produce flavin adenine dinucleotide (FAD) coenzyme. In Archaeoglobus profundus (strain DSM 5631 / JCM 9629 / NBRC 100127 / Av18), this protein is FAD synthase.